The following is a 205-amino-acid chain: Small ribosomal subunit protein uS4 (205 aa).

The S4 RNA-binding domain occupies 94-157 (SRLDTVVYRM…QQIPLIQESI (64 aa)).

This sequence belongs to the universal ribosomal protein uS4 family. In terms of assembly, part of the 30S ribosomal subunit. Contacts protein S5. The interaction surface between S4 and S5 is involved in control of translational fidelity.

Its function is as follows. One of the primary rRNA binding proteins, it binds directly to 16S rRNA where it nucleates assembly of the body of the 30S subunit. With S5 and S12 plays an important role in translational accuracy. This is Small ribosomal subunit protein uS4 from Rickettsia prowazekii (strain Madrid E).